The sequence spans 383 residues: 4-hydroxy-3-methylbut-2-en-1-yl diphosphate synthase (flavodoxin) (383 aa).

Positions 277, 280, 312, and 319 each coordinate [4Fe-4S] cluster.

This sequence belongs to the IspG family. It depends on [4Fe-4S] cluster as a cofactor.

The catalysed reaction is (2E)-4-hydroxy-3-methylbut-2-enyl diphosphate + oxidized [flavodoxin] + H2O + 2 H(+) = 2-C-methyl-D-erythritol 2,4-cyclic diphosphate + reduced [flavodoxin]. Its pathway is isoprenoid biosynthesis; isopentenyl diphosphate biosynthesis via DXP pathway; isopentenyl diphosphate from 1-deoxy-D-xylulose 5-phosphate: step 5/6. In terms of biological role, converts 2C-methyl-D-erythritol 2,4-cyclodiphosphate (ME-2,4cPP) into 1-hydroxy-2-methyl-2-(E)-butenyl 4-diphosphate. This Caulobacter vibrioides (strain ATCC 19089 / CIP 103742 / CB 15) (Caulobacter crescentus) protein is 4-hydroxy-3-methylbut-2-en-1-yl diphosphate synthase (flavodoxin).